The primary structure comprises 210 residues: Ribosomal RNA large subunit methyltransferase E (210 aa).

Gly-60, Trp-62, Asp-80, Asp-96, and Asp-121 together coordinate S-adenosyl-L-methionine. The active-site Proton acceptor is Lys-161.

This sequence belongs to the class I-like SAM-binding methyltransferase superfamily. RNA methyltransferase RlmE family.

Its subcellular location is the cytoplasm. It catalyses the reaction uridine(2552) in 23S rRNA + S-adenosyl-L-methionine = 2'-O-methyluridine(2552) in 23S rRNA + S-adenosyl-L-homocysteine + H(+). Functionally, specifically methylates the uridine in position 2552 of 23S rRNA at the 2'-O position of the ribose in the fully assembled 50S ribosomal subunit. This chain is Ribosomal RNA large subunit methyltransferase E, found in Vesicomyosocius okutanii subsp. Calyptogena okutanii (strain HA).